Consider the following 827-residue polypeptide: MTLSRRAFIKQTAAATAASAAGVVLPGVDALAASDSLTWSKAPCRFCGTGCGVSVGVKNGKVVATQGDPQAEVNRGLNCVKGYFLSKIMYGQDRLTTPLLRMKDGKYAKDGEFAPVSWDQAFDVMADHFKRTLKEKGPTAVGMFGSGQWTVWEGYAAVKLMKAGFRSNNLDPNARHCMASAVTGFMRTFGMDEPMGCYDDIEQADTFVLWGSNMSEMHPILWTRITDRRLSTPTTRVVVLSTFEHRSFDLADQTIIFTPQSDLAILNYIANYIIRNGNVNRDFVNRHTVFKQGNADIGYGLRPDNPLQKTARNAGDPNGSQPITFDEFAKFVSKYDAAYVTKLSGVPQNKLDQLARLYADPKVKVMSFWTMGFNQHTRGTWANNMVYNLHLLTGKIATPGNSPFSLTGQPSACGTAREVGTFSHRLPADMVVTNPKHREEAEHIWKLPAGTIPDKPGYHAVLQNRMLRDGKLNAYWVQVNNNVQAAANINGEALPGYRNPQAFVVVSDVYPTVTAVAADLILPSAMWVEKEGAYGNAERRTQFWHQLVDAPAGARSDLWQLVEFSKRFKVEEVWPADLLAKKPEYRGKTLYDVLYRNGQVDRFALTETDSHYRNDEAKAFGFYIQKGLFEEYASFGRGHGHDLAPFDAYHKARGLRWPVVNGKETRWRYKEGSDPYVKTGTGWQFYGNPDGRAVIYALPYEPPPEVPDKEYPFWLATGRVLEHWHSGSMTRRVPELYRAFPNAVCFMHPDDAKAMGVRRGVEVKVMSRRGYILTRVETRGRDKPPRGLVFVPWFDSSQLINKVTLDATDPISLQTDYKKCAVKIVKV.

The tat-type signal signal peptide spans 1-32 (MTLSRRAFIKQTAAATAASAAGVVLPGVDALA). Residues 37–93 (LTWSKAPCRFCGTGCGVSVGVKNGKVVATQGDPQAEVNRGLNCVKGYFLSKIMYGQD) form the 4Fe-4S Mo/W bis-MGD-type domain. Positions 44, 47, 51, and 79 each coordinate [4Fe-4S] cluster. Mo-bis(molybdopterin guanine dinucleotide) is bound by residues Lys-81, Gln-148, Asn-173, Cys-177, 241–245 (STFEH), 260–262 (QSD), Met-371, Gln-375, Asn-481, 507–508 (SD), Lys-530, Asp-557, and 717–726 (TGRVLEHWHS). Trp-793 lines the substrate pocket. Mo-bis(molybdopterin guanine dinucleotide)-binding residues include Asn-801 and Lys-818.

The protein belongs to the prokaryotic molybdopterin-containing oxidoreductase family. NasA/NapA/NarB subfamily. Component of the periplasmic nitrate reductase NapAB complex composed of NapA and NapB. It depends on [4Fe-4S] cluster as a cofactor. The cofactor is Mo-bis(molybdopterin guanine dinucleotide). Post-translationally, predicted to be exported by the Tat system. The position of the signal peptide cleavage has not been experimentally proven.

The protein localises to the periplasm. The enzyme catalyses 2 Fe(II)-[cytochrome] + nitrate + 2 H(+) = 2 Fe(III)-[cytochrome] + nitrite + H2O. Its function is as follows. Catalytic subunit of the periplasmic nitrate reductase complex NapAB. Receives electrons from NapB and catalyzes the reduction of nitrate to nitrite. This is Periplasmic nitrate reductase from Paraburkholderia xenovorans (strain LB400).